The following is a 592-amino-acid chain: 1,4-alpha-glucan branching enzyme GlgB 2 (592 aa).

Catalysis depends on D274, which acts as the Nucleophile. E327 serves as the catalytic Proton donor.

It belongs to the glycosyl hydrolase 13 family. GlgB subfamily. As to quaternary structure, monomer.

It catalyses the reaction Transfers a segment of a (1-&gt;4)-alpha-D-glucan chain to a primary hydroxy group in a similar glucan chain.. It participates in glycan biosynthesis; glycogen biosynthesis. Its function is as follows. Catalyzes the formation of the alpha-1,6-glucosidic linkages in glycogen by scission of a 1,4-alpha-linked oligosaccharide from growing alpha-1,4-glucan chains and the subsequent attachment of the oligosaccharide to the alpha-1,6 position. The protein is 1,4-alpha-glucan branching enzyme GlgB 2 of Streptomyces avermitilis (strain ATCC 31267 / DSM 46492 / JCM 5070 / NBRC 14893 / NCIMB 12804 / NRRL 8165 / MA-4680).